Here is a 197-residue protein sequence, read N- to C-terminus: Female-specific protein transformer (197 aa).

2 stretches are compositionally biased toward basic and acidic residues: residues 1–17 (MKMD…DSRG) and 24–39 (RERE…DSRK). 2 disordered regions span residues 1–136 (MKMD…PKII) and 158–197 (GYQR…RPPY). Composition is skewed to basic residues over residues 58-75 (RRLR…RSRS) and 84-127 (SRHR…RSPH). A compositionally biased stretch (pro residues) spans 163–172 (PRPPPFPPAP).

Its subcellular location is the nucleus speckle. Member of the regulatory pathway controlling female somatic sexual differentiation, regulated by Sxl. Activates dsx female-specific splicing by promoting the formation of a splicing enhancer complex which consists of tra, tra2 and sr proteins. Together with tra-2, plays a role in switching fru splicing from the male-specific pattern to the female-specific pattern through activation of the female-specific fru 5'-splice site. No known function in males. The chain is Female-specific protein transformer (tra) from Drosophila melanogaster (Fruit fly).